The following is a 149-amino-acid chain: Protein SprT-like (149 aa).

One can recognise a SprT-like domain in the interval 6-147 (LQALVEQISI…VCGRCRSKLK (142 aa)). A Zn(2+)-binding site is contributed by H67. Residue E68 is part of the active site. H71 provides a ligand contact to Zn(2+).

It belongs to the SprT family. It depends on Zn(2+) as a cofactor.

The protein localises to the cytoplasm. The sequence is that of Protein SprT-like from Geobacillus kaustophilus (strain HTA426).